Here is a 182-residue protein sequence, read N- to C-terminus: MSRIGKRPITIPAKVQVAINGTNIVVKGPKGELSRTLRDNVSLSQEGEILHVNRRDETRTSKQLHGLSRTLVANMVEGVSQGFQRRLEIQGVGYRAQLQGRNLVLNMGYSHQVQIEPPDGIQFAVEGTTNVIVSGYDKEIVGNTAAKIRAVRPPEPYKGKGIRYAGEVVRRKAGKTGKGGKK.

It belongs to the universal ribosomal protein uL6 family. In terms of assembly, part of the 50S ribosomal subunit.

In terms of biological role, this protein binds to the 23S rRNA, and is important in its secondary structure. It is located near the subunit interface in the base of the L7/L12 stalk, and near the tRNA binding site of the peptidyltransferase center. The polypeptide is Large ribosomal subunit protein uL6 (Nostoc punctiforme (strain ATCC 29133 / PCC 73102)).